A 441-amino-acid polypeptide reads, in one-letter code: Trigger factor (441 aa).

One can recognise a PPIase FKBP-type domain in the interval 175–260 (GDKVVIDYNS…LVSIMVPKDV (86 aa)).

The protein belongs to the FKBP-type PPIase family. Tig subfamily.

It localises to the cytoplasm. It carries out the reaction [protein]-peptidylproline (omega=180) = [protein]-peptidylproline (omega=0). Involved in protein export. Acts as a chaperone by maintaining the newly synthesized protein in an open conformation. Functions as a peptidyl-prolyl cis-trans isomerase. In Anaplasma marginale (strain St. Maries), this protein is Trigger factor.